Here is a 586-residue protein sequence, read N- to C-terminus: Asparagine synthetase [glutamine-hydrolyzing] (586 aa).

The For GATase activity role is filled by Cys-2. Positions 2–185 constitute a Glutamine amidotransferase type-2 domain; it reads CGILAVLGVV…PGHLYSSKTG (184 aa). Residues 50–54, 75–77, and Asp-98 each bind L-glutamine; these read RLAII and NGE. The region spanning 193–516 is the Asparagine synthetase domain; sequence PPWFSETVPS…PQDSARETVP (324 aa). Residues Leu-231, Ile-267, and 341–342 each bind ATP; that span reads SG.

The enzyme catalyses L-aspartate + L-glutamine + ATP + H2O = L-asparagine + L-glutamate + AMP + diphosphate + H(+). The protein operates within amino-acid biosynthesis; L-asparagine biosynthesis; L-asparagine from L-aspartate (L-Gln route): step 1/1. Essential for nitrogen assimilation, distribution and remobilization within the plant via the phloem. This chain is Asparagine synthetase [glutamine-hydrolyzing] (ASN1), found in Zea mays (Maize).